The sequence spans 78 residues: Large ribosomal subunit protein bL28 (78 aa).

Belongs to the bacterial ribosomal protein bL28 family.

This Pseudomonas aeruginosa (strain LESB58) protein is Large ribosomal subunit protein bL28.